The following is a 553-amino-acid chain: Fusion glycoprotein F0 (553 aa).

The N-terminal stretch at 1–31 is a signal peptide; that stretch reads MGSRPFTKNPAPMMLTIRVALVLSCICPANS. Over 31 to 500 the chain is Extracellular; sequence SIDGRPFAAA…VNVKLTSTSA (470 aa). Disulfide bonds link cysteine 76–cysteine 199, cysteine 338–cysteine 347, cysteine 362–cysteine 370, cysteine 394–cysteine 399, and cysteine 401–cysteine 424. 2 N-linked (GlcNAc...) asparagine; by host glycosylation sites follow: asparagine 85 and asparagine 191. N-linked (GlcNAc...) asparagine; by host glycosylation occurs at asparagine 366. N-linked (GlcNAc...) asparagine; by host glycosylation is found at asparagine 447 and asparagine 471. The stretch at 463-499 forms a coiled coil; it reads ISTELGNVNNSISNALNKLEESNRKLDKVNVKLTSTS. Residues 501–521 traverse the membrane as a helical segment; the sequence is LITYIVLTIISLVFGILSLIL. The Cytoplasmic segment spans residues 522 to 553; sequence ACYLMYKQKAQQKTLLWLGNNTLDQMRATTKM. Cysteine 523 carries S-palmitoyl cysteine; by host lipidation.

Belongs to the paramyxoviruses fusion glycoprotein family. As to quaternary structure, homotrimer of disulfide-linked F1-F2. The inactive precursor F0 is glycosylated and proteolytically cleaved into F1 and F2 to be functionally active. The cleavage is mediated by cellular proteases during the transport and maturation of the polypeptide.

The protein resides in the virion membrane. It localises to the host cell membrane. In terms of biological role, class I viral fusion protein. Under the current model, the protein has at least 3 conformational states: pre-fusion native state, pre-hairpin intermediate state, and post-fusion hairpin state. During viral and plasma cell membrane fusion, the heptad repeat (HR) regions assume a trimer-of-hairpins structure, positioning the fusion peptide in close proximity to the C-terminal region of the ectodomain. The formation of this structure appears to drive apposition and subsequent fusion of viral and plasma cell membranes. Directs fusion of viral and cellular membranes leading to delivery of the nucleocapsid into the cytoplasm. This fusion is pH independent and occurs directly at the outer cell membrane. The trimer of F1-F2 (F protein) probably interacts with HN at the virion surface. Upon HN binding to its cellular receptor, the hydrophobic fusion peptide is unmasked and interacts with the cellular membrane, inducing the fusion between cell and virion membranes. Later in infection, F proteins expressed at the plasma membrane of infected cells could mediate fusion with adjacent cells to form syncytia, a cytopathic effect that could lead to tissue necrosis. In Gallus gallus (Chicken), this protein is Fusion glycoprotein F0 (F).